We begin with the raw amino-acid sequence, 291 residues long: ATP synthase gamma chain (291 aa).

The protein belongs to the ATPase gamma chain family. F-type ATPases have 2 components, CF(1) - the catalytic core - and CF(0) - the membrane proton channel. CF(1) has five subunits: alpha(3), beta(3), gamma(1), delta(1), epsilon(1). CF(0) has three main subunits: a, b and c.

The protein localises to the cell inner membrane. Its function is as follows. Produces ATP from ADP in the presence of a proton gradient across the membrane. The gamma chain is believed to be important in regulating ATPase activity and the flow of protons through the CF(0) complex. In Cupriavidus pinatubonensis (strain JMP 134 / LMG 1197) (Cupriavidus necator (strain JMP 134)), this protein is ATP synthase gamma chain.